A 65-amino-acid chain; its full sequence is Alpha-conotoxin BnIA (65 aa).

The N-terminal stretch at 1–21 is a signal peptide; sequence MGMRMMFTMFLLVVLATTVVS. The propeptide occupies 22–48; sequence FASDRASDGRNAAAKDKASDLVALTVK. Intrachain disulfides connect Cys-50-Cys-56 and Cys-51-Cys-64. Positions 52–54 are ser-Xaa-Pro motif, crucial for potent interaction with nAChR; sequence SHP. Cys-64 carries the cysteine amide modification.

It belongs to the conotoxin A superfamily. As to expression, expressed by the venom duct.

Its subcellular location is the secreted. Its function is as follows. Alpha-conotoxins act on postsynaptic membranes, they bind to the nicotinic acetylcholine receptors (nAChR) and thus inhibit them. This toxin inhibits acetylcholine-evoked currents reversibly in oocytes expressing the human alpha-7/CHRNA7 nAChR, and blocks nerve-evoked skeletal muscle contractions in isolated mouse neuromuscular preparations, but with a very low affinity. This Conus bandanus (Banded marble cone) protein is Alpha-conotoxin BnIA.